Here is a 191-residue protein sequence, read N- to C-terminus: MEVSREIIEKLEIFQKLVKKWNKSINLVSGNTIHNFWQRHILDSLQLMQYIDNKEIHLVDIGSGAGFPGIVLSIAGVAKVSLIEADLRKCIFLEKASKISNNNIQIINQRIEKVAIDCSILTCRAFSKLNTIFNCIKNISVQEKVLLLKGKNYLTEIVAAKEMWLFDYLIHQSITCEEGKILEVSNLTKII.

Residues Gly62, Phe67, 111–112 (IE), and Arg124 contribute to the S-adenosyl-L-methionine site.

Belongs to the methyltransferase superfamily. RNA methyltransferase RsmG family.

Its subcellular location is the cytoplasm. The catalysed reaction is guanosine(527) in 16S rRNA + S-adenosyl-L-methionine = N(7)-methylguanosine(527) in 16S rRNA + S-adenosyl-L-homocysteine. In terms of biological role, specifically methylates the N7 position of guanine in position 527 of 16S rRNA. This chain is Ribosomal RNA small subunit methyltransferase G, found in Rickettsia akari (strain Hartford).